Consider the following 181-residue polypeptide: MTANVNNLIWIDLEMTGLEPDVDRIIEIATLVTDQELNIIGQGPVIAIHQPDEVLAAMDDWNQKHHGESGLIDRVRASQDNEAQAVAKTIAFLEQYVPKGASPMCGNSVGQDRRFLNRYMRELEDYFHYRNLDVSTVKELVKRWSPEIMEGFKKQNTHQALQDIQESIAELQYYRSKVFKI.

Residues 8–171 form the Exonuclease domain; that stretch reads LIWIDLEMTG…QDIQESIAEL (164 aa). Tyr129 is an active-site residue.

Belongs to the oligoribonuclease family.

The protein localises to the cytoplasm. Functionally, 3'-to-5' exoribonuclease specific for small oligoribonucleotides. The sequence is that of Oligoribonuclease from Shewanella putrefaciens (strain CN-32 / ATCC BAA-453).